The following is a 211-amino-acid chain: FMN-dependent NADH:quinone oxidoreductase 3 (211 aa).

102–105 (MWNF) contributes to the FMN binding site.

The protein belongs to the azoreductase type 1 family. In terms of assembly, homodimer. FMN serves as cofactor.

It catalyses the reaction 2 a quinone + NADH + H(+) = 2 a 1,4-benzosemiquinone + NAD(+). It carries out the reaction N,N-dimethyl-1,4-phenylenediamine + anthranilate + 2 NAD(+) = 2-(4-dimethylaminophenyl)diazenylbenzoate + 2 NADH + 2 H(+). In terms of biological role, quinone reductase that provides resistance to thiol-specific stress caused by electrophilic quinones. Also exhibits azoreductase activity. Catalyzes the reductive cleavage of the azo bond in aromatic azo compounds to the corresponding amines. The polypeptide is FMN-dependent NADH:quinone oxidoreductase 3 (Bacillus cereus (strain ZK / E33L)).